We begin with the raw amino-acid sequence, 153 residues long: Ribosomal RNA large subunit methyltransferase H (153 aa).

Residues Leu-71 and Gly-102 each coordinate S-adenosyl-L-methionine.

It belongs to the RNA methyltransferase RlmH family. As to quaternary structure, homodimer.

It localises to the cytoplasm. The enzyme catalyses pseudouridine(1915) in 23S rRNA + S-adenosyl-L-methionine = N(3)-methylpseudouridine(1915) in 23S rRNA + S-adenosyl-L-homocysteine + H(+). Specifically methylates the pseudouridine at position 1915 (m3Psi1915) in 23S rRNA. This chain is Ribosomal RNA large subunit methyltransferase H, found in Anaeromyxobacter sp. (strain K).